We begin with the raw amino-acid sequence, 209 residues long: Kynurenine formamidase (209 aa).

Trp-20 lines the substrate pocket. Residues His-50, His-54, and Asp-56 each coordinate Zn(2+). Catalysis depends on His-60, which acts as the Proton donor/acceptor. Positions 161 and 173 each coordinate Zn(2+).

Belongs to the Cyclase 1 superfamily. KynB family. Homodimer. Zn(2+) serves as cofactor.

It catalyses the reaction N-formyl-L-kynurenine + H2O = L-kynurenine + formate + H(+). It participates in amino-acid degradation; L-tryptophan degradation via kynurenine pathway; L-kynurenine from L-tryptophan: step 2/2. Its function is as follows. Catalyzes the hydrolysis of N-formyl-L-kynurenine to L-kynurenine, the second step in the kynurenine pathway of tryptophan degradation. The chain is Kynurenine formamidase from Bacillus mycoides (strain KBAB4) (Bacillus weihenstephanensis).